The primary structure comprises 147 residues: MLTLPEYNEQIPNVRSLLTKWAKVERIQDVQDGLQLDVRLKTDTLLELHIYYDHVYHVPSIKFRLWSLDTEEDISSLRLLTLSDSELRSILNLGTFSVTLSTDMEMKSVYYYINNCDTDANVGSDVEHYLTRWISLYIRIFDLNFVP.

Cysteine 116 functions as the Glycyl thioester intermediate in the catalytic mechanism.

This sequence belongs to the ATG10 family. As to quaternary structure, forms homooligomers. Interacts with ATG10. Interacts with ATG7 and ATG12.

The protein localises to the preautophagosomal structure membrane. Its function is as follows. E2-like enzyme required for the cytoplasm to vacuole transport (Cvt), autophagy and nucleophagy. Acts as an E2-like enzyme that catalyzes the conjugation of ATG12 to ATG5. ATG12 conjugation to ATG5 is required for proper localization of ATG8 to the preautophagosomal structure (PAS). Likely serves as an ATG5-recognition molecule. This is Ubiquitin-like-conjugating enzyme ATG10 from Kluyveromyces marxianus (strain DMKU3-1042 / BCC 29191 / NBRC 104275) (Yeast).